The primary structure comprises 459 residues: Bifunctional protein GlmU (459 aa).

The pyrophosphorylase stretch occupies residues 1–230; that stretch reads MSNRFAVILA…FDETLGVNDR (230 aa). UDP-N-acetyl-alpha-D-glucosamine is bound by residues 9–12, lysine 23, glutamine 73, and 78–79; these read LAAG and GT. Aspartate 103 serves as a coordination point for Mg(2+). Positions 140, 155, 170, and 228 each coordinate UDP-N-acetyl-alpha-D-glucosamine. Residue asparagine 228 coordinates Mg(2+). The tract at residues 231-251 is linker; it reads VALSQAEIIMKNRINRKNMVN. An N-acetyltransferase region spans residues 252-459; that stretch reads GVTIIDPSNT…VDQLLNKKKS (208 aa). The UDP-N-acetyl-alpha-D-glucosamine site is built by arginine 333 and lysine 351. Histidine 363 serves as the catalytic Proton acceptor. UDP-N-acetyl-alpha-D-glucosamine-binding residues include tyrosine 366 and asparagine 377. Residues 386–387, alanine 423, and arginine 440 each bind acetyl-CoA; that span reads NY.

This sequence in the N-terminal section; belongs to the N-acetylglucosamine-1-phosphate uridyltransferase family. In the C-terminal section; belongs to the transferase hexapeptide repeat family. Homotrimer. Mg(2+) is required as a cofactor.

The protein resides in the cytoplasm. It carries out the reaction alpha-D-glucosamine 1-phosphate + acetyl-CoA = N-acetyl-alpha-D-glucosamine 1-phosphate + CoA + H(+). The catalysed reaction is N-acetyl-alpha-D-glucosamine 1-phosphate + UTP + H(+) = UDP-N-acetyl-alpha-D-glucosamine + diphosphate. The protein operates within nucleotide-sugar biosynthesis; UDP-N-acetyl-alpha-D-glucosamine biosynthesis; N-acetyl-alpha-D-glucosamine 1-phosphate from alpha-D-glucosamine 6-phosphate (route II): step 2/2. Its pathway is nucleotide-sugar biosynthesis; UDP-N-acetyl-alpha-D-glucosamine biosynthesis; UDP-N-acetyl-alpha-D-glucosamine from N-acetyl-alpha-D-glucosamine 1-phosphate: step 1/1. It participates in bacterial outer membrane biogenesis; LPS lipid A biosynthesis. In terms of biological role, catalyzes the last two sequential reactions in the de novo biosynthetic pathway for UDP-N-acetylglucosamine (UDP-GlcNAc). The C-terminal domain catalyzes the transfer of acetyl group from acetyl coenzyme A to glucosamine-1-phosphate (GlcN-1-P) to produce N-acetylglucosamine-1-phosphate (GlcNAc-1-P), which is converted into UDP-GlcNAc by the transfer of uridine 5-monophosphate (from uridine 5-triphosphate), a reaction catalyzed by the N-terminal domain. This is Bifunctional protein GlmU from Bacillus cereus (strain G9842).